A 132-amino-acid chain; its full sequence is UPF0102 protein Achl_2213 (132 aa).

Belongs to the UPF0102 family.

This chain is UPF0102 protein Achl_2213, found in Pseudarthrobacter chlorophenolicus (strain ATCC 700700 / DSM 12829 / CIP 107037 / JCM 12360 / KCTC 9906 / NCIMB 13794 / A6) (Arthrobacter chlorophenolicus).